Here is a 324-residue protein sequence, read N- to C-terminus: Lipoyl synthase, chloroplastic (324 aa).

Low complexity-rich tracts occupy residues methionine 1 to alanine 12 and lysine 20 to proline 29. Residues methionine 1–proline 30 are disordered. Positions 58, 63, 69, 86, 90, 93, and 302 each coordinate [4Fe-4S] cluster. The Radical SAM core domain occupies glycine 72–arginine 291.

The protein belongs to the radical SAM superfamily. Lipoyl synthase family. [4Fe-4S] cluster serves as cofactor.

The protein localises to the plastid. Its subcellular location is the chloroplast. It catalyses the reaction [[Fe-S] cluster scaffold protein carrying a second [4Fe-4S](2+) cluster] + N(6)-octanoyl-L-lysyl-[protein] + 2 oxidized [2Fe-2S]-[ferredoxin] + 2 S-adenosyl-L-methionine + 4 H(+) = [[Fe-S] cluster scaffold protein] + N(6)-[(R)-dihydrolipoyl]-L-lysyl-[protein] + 4 Fe(3+) + 2 hydrogen sulfide + 2 5'-deoxyadenosine + 2 L-methionine + 2 reduced [2Fe-2S]-[ferredoxin]. It participates in protein modification; protein lipoylation via endogenous pathway; protein N(6)-(lipoyl)lysine from octanoyl-[acyl-carrier-protein]: step 2/2. Catalyzes the radical-mediated insertion of two sulfur atoms into the C-6 and C-8 positions of the octanoyl moiety bound to the lipoyl domains of lipoate-dependent enzymes, thereby converting the octanoylated domains into lipoylated derivatives. This Ostreococcus lucimarinus (strain CCE9901) protein is Lipoyl synthase, chloroplastic.